The chain runs to 441 residues: Glutamyl-tRNA reductase (441 aa).

Substrate-binding positions include 49-52, Ser109, 114-116, and Gln120; these read TCNR and EGQ. Cys50 serves as the catalytic Nucleophile. 198–203 contacts NADP(+); that stretch reads GAGRMS.

Belongs to the glutamyl-tRNA reductase family. As to quaternary structure, homodimer.

It catalyses the reaction (S)-4-amino-5-oxopentanoate + tRNA(Glu) + NADP(+) = L-glutamyl-tRNA(Glu) + NADPH + H(+). It functions in the pathway porphyrin-containing compound metabolism; protoporphyrin-IX biosynthesis; 5-aminolevulinate from L-glutamyl-tRNA(Glu): step 1/2. Its pathway is porphyrin-containing compound metabolism; chlorophyll biosynthesis. Functionally, catalyzes the NADPH-dependent reduction of glutamyl-tRNA(Glu) to glutamate 1-semialdehyde (GSA). The polypeptide is Glutamyl-tRNA reductase (Prochlorococcus marinus (strain NATL1A)).